Consider the following 152-residue polypeptide: Xanthine-guanine phosphoribosyltransferase (152 aa).

Residues 37 to 38 (RG), Arg-69, and 88 to 96 (DDLVDTGGT) contribute to the 5-phospho-alpha-D-ribose 1-diphosphate site. Arg-69 provides a ligand contact to GMP. Asp-89 is a Mg(2+) binding site. The guanine site is built by Asp-92 and Ile-135. Xanthine is bound by residues Asp-92 and Ile-135. Residues 92–96 (DTGGT) and 134–135 (WI) contribute to the GMP site.

Belongs to the purine/pyrimidine phosphoribosyltransferase family. XGPT subfamily. Homotetramer. Mg(2+) serves as cofactor.

Its subcellular location is the cell inner membrane. It carries out the reaction GMP + diphosphate = guanine + 5-phospho-alpha-D-ribose 1-diphosphate. It catalyses the reaction XMP + diphosphate = xanthine + 5-phospho-alpha-D-ribose 1-diphosphate. The catalysed reaction is IMP + diphosphate = hypoxanthine + 5-phospho-alpha-D-ribose 1-diphosphate. It functions in the pathway purine metabolism; GMP biosynthesis via salvage pathway; GMP from guanine: step 1/1. Its pathway is purine metabolism; XMP biosynthesis via salvage pathway; XMP from xanthine: step 1/1. In terms of biological role, purine salvage pathway enzyme that catalyzes the transfer of the ribosyl-5-phosphate group from 5-phospho-alpha-D-ribose 1-diphosphate (PRPP) to the N9 position of the 6-oxopurines guanine and xanthine to form the corresponding ribonucleotides GMP (guanosine 5'-monophosphate) and XMP (xanthosine 5'-monophosphate), with the release of PPi. To a lesser extent, also acts on hypoxanthine. This Escherichia coli (strain UTI89 / UPEC) protein is Xanthine-guanine phosphoribosyltransferase.